Consider the following 236-residue polypeptide: 2,3,4,5-tetrahydropyridine-2,6-dicarboxylate N-acetyltransferase (236 aa).

Belongs to the transferase hexapeptide repeat family. DapH subfamily.

It catalyses the reaction (S)-2,3,4,5-tetrahydrodipicolinate + acetyl-CoA + H2O = L-2-acetamido-6-oxoheptanedioate + CoA. Its pathway is amino-acid biosynthesis; L-lysine biosynthesis via DAP pathway; LL-2,6-diaminopimelate from (S)-tetrahydrodipicolinate (acetylase route): step 1/3. Its function is as follows. Catalyzes the transfer of an acetyl group from acetyl-CoA to tetrahydrodipicolinate. The protein is 2,3,4,5-tetrahydropyridine-2,6-dicarboxylate N-acetyltransferase of Thermotoga maritima (strain ATCC 43589 / DSM 3109 / JCM 10099 / NBRC 100826 / MSB8).